Reading from the N-terminus, the 333-residue chain is Trimethylamine N-oxide-binding protein (333 aa).

The signal sequence occupies residues 1 to 42 (MRLFREIAANDPGPTGRMKNMKTFTTALATGVLALCPLAALA). Residues Trp-55, Trp-102, Glu-131, Trp-177, and Trp-222 each contribute to the trimethylamine N-oxide site. Residues Pro-249, Val-251, Asn-254, Ala-257, and Asp-260 each coordinate Ca(2+).

The complex is probably composed of two ATP-binding proteins (TmoW), two transmembrane proteins (TmoV) and a solute-binding protein (TmoX). Monomer in solution, but forms homodimers in crystals.

The protein localises to the periplasm. Binds a Ca(2+) ion, which has little effect on either the binding affinity or the secondary structure, but plays an important role in maintaining the stability of TmoX. It may modulate the protein stability in response to biological needs and environmental changes. Thermostability is dramatically decreased when Ca(2+) is removed by EDTA. In terms of biological role, part of the ABC transporter complex TmoXWV involved in trimethylamine N-oxide (TMAO) import. Is specific for TMAO and essential for TMAO metabolism. Binds TMAO with high affinity. In vitro, also presents a high binding affinity for choline, however this transporter seems specific for TMAO and the choline-binding affinity presented by recombinant TmoX may not make physiological sense. This is Trimethylamine N-oxide-binding protein from Ruegeria pomeroyi (strain ATCC 700808 / DSM 15171 / DSS-3) (Silicibacter pomeroyi).